The chain runs to 1169 residues: Protein qua-1 (1169 aa).

Residues 1–22 (MRRLSAILPILLLSNFWPTVES) form the signal peptide. 2 disordered regions span residues 261–338 (GATG…AGTN) and 368–933 (AGGV…RTSS). Low complexity predominate over residues 278–292 (ESNGNNNNSFEGGRS). Residues 312-337 (GAGGKGGAGADGAAGSGAGAGAGAGT) show a composition bias toward gly residues. Acidic residues-rich tracts occupy residues 426–437 (DEEDEEDNGDED) and 453–464 (DDGDGDEDDDGT). Residues 511–523 (SPDDNDLLEKDEN) show a composition bias toward basic and acidic residues. Gly residues-rich tracts occupy residues 526 to 536 (NGKGGAGNGNG), 545 to 572 (KGNGTGDGDGDGNGNGNGLTGDGNGTGD), 605 to 634 (DGNGNGTGDGNGDGNDNGNGSKGLGTGSGD), 656 to 700 (GSNG…GGTG), and 727 to 752 (NAEGNGKGNGNDGKGSGSGDGSGAGG). Residues 753–774 (KGDKSDSESGNEADGKDGKKNE) show a composition bias toward basic and acidic residues. Positions 775 to 791 (GAGGEAAAGSGGANKGG) are enriched in gly residues. Over residues 793-803 (DGDDDDVDVTD) the composition is skewed to acidic residues. Polar residues predominate over residues 840 to 855 (GTVQTGAKHNAESSAS). The span at 889 to 906 (SGTSESVTNGSGATESGS) shows a compositional bias: low complexity. A compositionally biased stretch (gly residues) spans 907-923 (TGSGTTGTGTSGTGSSG). The span at 924–933 (TGASAARTSS) shows a compositional bias: low complexity.

Transiently expressed in head cells.

It localises to the cytoplasmic vesicle. It is found in the secreted. The protein localises to the extracellular space. The protein resides in the extracellular matrix. Functionally, required for cuticle shedding and normal alae morphology and localization, and subsequently larval development. This chain is Protein qua-1, found in Caenorhabditis elegans.